The primary structure comprises 133 residues: Large ribosomal subunit protein bL17 (133 aa).

The protein belongs to the bacterial ribosomal protein bL17 family. Part of the 50S ribosomal subunit. Contacts protein L32.

The protein is Large ribosomal subunit protein bL17 of Polaromonas naphthalenivorans (strain CJ2).